A 252-amino-acid polypeptide reads, in one-letter code: Serine/threonine phosphatase stp (252 aa).

Basic and acidic residues predominate over residues 1–18; the sequence is MHAEFRTDRGRIRHHNED. Residues 1–23 form a disordered region; sequence MHAEFRTDRGRIRHHNEDNGGVF. Positions 2 to 242 constitute a PPM-type phosphatase domain; that stretch reads HAEFRTDRGR…DNITVLLVER (241 aa). The Mn(2+) site is built by Asp-36, Gly-37, Asp-194, and Asp-233.

This sequence belongs to the PP2C family. Mn(2+) is required as a cofactor.

Its subcellular location is the cytoplasm. It is found in the membrane. It catalyses the reaction O-phospho-L-seryl-[protein] + H2O = L-seryl-[protein] + phosphate. It carries out the reaction O-phospho-L-threonyl-[protein] + H2O = L-threonyl-[protein] + phosphate. Functionally, protein phosphatase that dephosphorylates EF-Tu. This chain is Serine/threonine phosphatase stp (stp), found in Listeria monocytogenes serotype 4b (strain F2365).